A 303-amino-acid polypeptide reads, in one-letter code: WD repeat-containing protein 38 (303 aa).

WD repeat units lie at residues 24–63, 66–105, 108–147, 150–189, 195–233, 236–277, and 279–303; these read QHHG…LLWR, GHRG…CLHV, GHQR…RVHL, GHCD…PVVS, GHTG…LPLQ, GHTI…ETLK, and MLDV…AVTR.

The sequence is that of WD repeat-containing protein 38 (Wdr38) from Mus musculus (Mouse).